The sequence spans 400 residues: Imidazolonepropionase (400 aa).

Fe(3+)-binding residues include H70 and H72. 2 residues coordinate Zn(2+): H70 and H72. 4-imidazolone-5-propanoate-binding residues include R79, Y142, and H175. Y142 contributes to the N-formimidoyl-L-glutamate binding site. A Fe(3+)-binding site is contributed by H239. Position 239 (H239) interacts with Zn(2+). Q242 provides a ligand contact to 4-imidazolone-5-propanoate. D314 contacts Fe(3+). D314 serves as a coordination point for Zn(2+). N-formimidoyl-L-glutamate contacts are provided by N316 and G318. Residue T319 coordinates 4-imidazolone-5-propanoate.

It belongs to the metallo-dependent hydrolases superfamily. HutI family. The cofactor is Zn(2+). Requires Fe(3+) as cofactor.

It is found in the cytoplasm. It carries out the reaction 4-imidazolone-5-propanoate + H2O = N-formimidoyl-L-glutamate. Its pathway is amino-acid degradation; L-histidine degradation into L-glutamate; N-formimidoyl-L-glutamate from L-histidine: step 3/3. Functionally, catalyzes the hydrolytic cleavage of the carbon-nitrogen bond in imidazolone-5-propanoate to yield N-formimidoyl-L-glutamate. It is the third step in the universal histidine degradation pathway. In Methylobacterium sp. (strain 4-46), this protein is Imidazolonepropionase.